The sequence spans 175 residues: Protein LpfE (175 aa).

The first 20 residues, 1–20, serve as a signal peptide directing secretion; the sequence is MKNLHALMPACLLLTASAMA.

The protein belongs to the fimbrial protein family.

The protein resides in the fimbrium. This Salmonella typhimurium (strain LT2 / SGSC1412 / ATCC 700720) protein is Protein LpfE (lpfE).